Reading from the N-terminus, the 365-residue chain is Aminomethyltransferase (365 aa).

The protein belongs to the GcvT family. The glycine cleavage system is composed of four proteins: P, T, L and H.

The enzyme catalyses N(6)-[(R)-S(8)-aminomethyldihydrolipoyl]-L-lysyl-[protein] + (6S)-5,6,7,8-tetrahydrofolate = N(6)-[(R)-dihydrolipoyl]-L-lysyl-[protein] + (6R)-5,10-methylene-5,6,7,8-tetrahydrofolate + NH4(+). The glycine cleavage system catalyzes the degradation of glycine. This Halalkalibacterium halodurans (strain ATCC BAA-125 / DSM 18197 / FERM 7344 / JCM 9153 / C-125) (Bacillus halodurans) protein is Aminomethyltransferase.